A 181-amino-acid polypeptide reads, in one-letter code: Crustacyanin-A1 subunit (181 aa).

Intrachain disulfides connect Cys-12/Cys-121, Cys-51/Cys-173, and Cys-117/Cys-150.

This sequence belongs to the calycin superfamily. Lipocalin family. In terms of assembly, oligomer; Can form dimers (beta-crustacyanin); or complexes of 16 subunits (alpha-crustacyanin). There are five types of subunits: A1, A2, A3, C1 and C2. In terms of tissue distribution, found in the carapace.

The protein resides in the secreted. It localises to the extracellular space. Functionally, binds the carotenoid astaxanthin (AXT) which provides the blue coloration to the carapace of the lobster. This chain is Crustacyanin-A1 subunit, found in Homarus gammarus (European lobster).